The primary structure comprises 593 residues: Glutamate decarboxylase 1 (593 aa).

Residues 1–12 (MASSTPSPATSS) show a composition bias toward low complexity. Residues 1–22 (MASSTPSPATSSNAGADPNTTN) are disordered. S77 bears the Phosphoserine mark. 189 to 191 (QLS) contributes to the 4-aminobutanoate binding site. K404 bears the N6-(pyridoxal phosphate)lysine mark. R566 provides a ligand contact to 4-aminobutanoate.

It belongs to the group II decarboxylase family. Homodimer. The cofactor is pyridoxal 5'-phosphate. In terms of tissue distribution, expressed in brain and pancreatic islets.

It carries out the reaction L-glutamate + H(+) = 4-aminobutanoate + CO2. Catalyzes the synthesis of the inhibitory neurotransmitter gamma-aminobutyric acid (GABA) with pyridoxal 5'-phosphate as cofactor. This chain is Glutamate decarboxylase 1 (Gad1), found in Rattus norvegicus (Rat).